A 930-amino-acid chain; its full sequence is Translation initiation factor IF-2 (930 aa).

The segment covering 50–67 (FKPAAAPKVEAKPAAPKV) has biased composition (low complexity). Disordered stretches follow at residues 50–217 (FKPA…SSEE) and 260–346 (EVVP…HELP). 2 stretches are compositionally biased toward basic and acidic residues: residues 68–90 (SAEK…EAKP) and 110–125 (FKAE…AERR). Residues 129 to 141 (KGNNRDQQQNGNR) are compositionally biased toward low complexity. Composition is skewed to basic and acidic residues over residues 157-167 (RDNRRFNDQAK) and 262-295 (VPEK…DGPR). Over residues 309–318 (NQKNSNWNNN) the composition is skewed to low complexity. The segment covering 337–346 (VTERKFHELP) has biased composition (basic and acidic residues). One can recognise a tr-type G domain in the interval 432 to 599 (ERPPVVTIMG…TVLLVAEIQE (168 aa)). The segment at 441 to 448 (GHVDHGKT) is G1. 441 to 448 (GHVDHGKT) provides a ligand contact to GTP. The tract at residues 466–470 (GITQH) is G2. A G3 region spans residues 487–490 (DTPG). Residues 487–491 (DTPGH) and 541–544 (NKID) each bind GTP. A G4 region spans residues 541 to 544 (NKID). A G5 region spans residues 577–579 (SAK).

It belongs to the TRAFAC class translation factor GTPase superfamily. Classic translation factor GTPase family. IF-2 subfamily.

The protein resides in the cytoplasm. One of the essential components for the initiation of protein synthesis. Protects formylmethionyl-tRNA from spontaneous hydrolysis and promotes its binding to the 30S ribosomal subunits. Also involved in the hydrolysis of GTP during the formation of the 70S ribosomal complex. The chain is Translation initiation factor IF-2 from Streptococcus pneumoniae (strain Taiwan19F-14).